The chain runs to 323 residues: Large ribosomal subunit protein uL10 (323 aa).

The disordered stretch occupies residues 296–323; sequence AAPAAPSAAAKEEPEESDEDDFGMGGLF. A compositionally biased stretch (acidic residues) spans 308–317; the sequence is EPEESDEDDF.

Belongs to the universal ribosomal protein uL10 family. As to quaternary structure, P0 forms a pentameric complex by interaction with dimers of P1 and P2. In terms of processing, phosphorylated.

Ribosomal protein P0 is the functional equivalent of E.coli protein L10. This chain is Large ribosomal subunit protein uL10 (LIPO-A), found in Leishmania infantum.